The chain runs to 216 residues: Adenylate kinase (216 aa).

10-15 (GAGKGT) is an ATP binding site. The segment at 30–59 (STGDMLRAAVKAGTPLGLELKKVMDAGQLV) is NMP. AMP is bound by residues threonine 31, arginine 36, 57–59 (QLV), 85–88 (GFPR), and glutamine 92. Residues 122-159 (GRRVHLASGRTYHIQYNPPKVEGKDDVTGEDLIQRDDD) form an LID region. Residues arginine 123 and 132 to 133 (TY) contribute to the ATP site. Positions 156 and 167 each coordinate AMP. Glycine 202 is a binding site for ATP.

Belongs to the adenylate kinase family. Monomer.

It localises to the cytoplasm. It catalyses the reaction AMP + ATP = 2 ADP. The protein operates within purine metabolism; AMP biosynthesis via salvage pathway; AMP from ADP: step 1/1. In terms of biological role, catalyzes the reversible transfer of the terminal phosphate group between ATP and AMP. Plays an important role in cellular energy homeostasis and in adenine nucleotide metabolism. The protein is Adenylate kinase of Pseudomonas putida (strain GB-1).